A 603-amino-acid polypeptide reads, in one-letter code: Elongation factor 4 (603 aa).

Residues 7-189 (SRIRNFSIIA…SIVHLVPPPE (183 aa)) enclose the tr-type G domain. GTP-binding positions include 19-24 (DHGKST) and 136-139 (NKID).

Belongs to the TRAFAC class translation factor GTPase superfamily. Classic translation factor GTPase family. LepA subfamily.

The protein localises to the cell inner membrane. The enzyme catalyses GTP + H2O = GDP + phosphate + H(+). Required for accurate and efficient protein synthesis under certain stress conditions. May act as a fidelity factor of the translation reaction, by catalyzing a one-codon backward translocation of tRNAs on improperly translocated ribosomes. Back-translocation proceeds from a post-translocation (POST) complex to a pre-translocation (PRE) complex, thus giving elongation factor G a second chance to translocate the tRNAs correctly. Binds to ribosomes in a GTP-dependent manner. This is Elongation factor 4 from Acaryochloris marina (strain MBIC 11017).